Reading from the N-terminus, the 234-residue chain is Purine nucleoside phosphorylase DeoD-type (234 aa).

His5 contacts a purine D-ribonucleoside. Phosphate is bound by residues Gly21, Arg25, Arg44, and 88–91 (RIGT). A purine D-ribonucleoside is bound by residues 180–182 (DME) and 204–205 (SD). Asp205 functions as the Proton donor in the catalytic mechanism.

It belongs to the PNP/UDP phosphorylase family. As to quaternary structure, homohexamer; trimer of homodimers.

The catalysed reaction is a purine D-ribonucleoside + phosphate = a purine nucleobase + alpha-D-ribose 1-phosphate. It catalyses the reaction a purine 2'-deoxy-D-ribonucleoside + phosphate = a purine nucleobase + 2-deoxy-alpha-D-ribose 1-phosphate. In terms of biological role, catalyzes the reversible phosphorolytic breakdown of the N-glycosidic bond in the beta-(deoxy)ribonucleoside molecules, with the formation of the corresponding free purine bases and pentose-1-phosphate. This Buchnera aphidicola subsp. Acyrthosiphon pisum (strain APS) (Acyrthosiphon pisum symbiotic bacterium) protein is Purine nucleoside phosphorylase DeoD-type.